Here is an 848-residue protein sequence, read N- to C-terminus: F-BAR domain only protein 2 (848 aa).

The region spanning 4 to 250 is the F-BAR domain; sequence PYFLENFWGN…NMENTSVESL (247 aa). A coiled-coil region spans residues 87–114; it reads HMELVRKLQELIKEVQKYVDEQAKNHKK. Disordered stretches follow at residues 292–316 and 404–526; these read IPGR…NASN and LSPT…RAES. Phosphoserine is present on residues S405 and S417. Over residues 445–460 the composition is skewed to low complexity; sequence PFGPTSTGSSSSLPQS. The MHD domain maps to 580-848; it reads ALPIAVAFTE…FATGRYMADC (269 aa).

This sequence belongs to the FCHO family. As to quaternary structure, homodimer.

Its subcellular location is the membrane. The protein localises to the clathrin-coated pit. Its function is as follows. May function in an early step of clathrin-mediated endocytosis. The protein is F-BAR domain only protein 2 (fcho2) of Danio rerio (Zebrafish).